Reading from the N-terminus, the 346-residue chain is uncharacterized protein (346 aa).

This is an uncharacterized protein from Schizosaccharomyces pombe (strain 972 / ATCC 24843) (Fission yeast).